A 296-amino-acid polypeptide reads, in one-letter code: 4-hydroxybenzoate octaprenyltransferase (296 aa).

Helical transmembrane passes span 28–48, 52–72, 102–122, 146–166, 169–189, 219–239, 241–261, and 275–295; these read PIGI…AAEG, LSHV…GCAI, ALIL…CTNA, YYPQ…TFTA, GELP…TVGY, VIIL…GARF, LGGW…WEFW, and FLHN…DYAL.

The protein belongs to the UbiA prenyltransferase family. Mg(2+) is required as a cofactor.

It localises to the cell inner membrane. It catalyses the reaction all-trans-octaprenyl diphosphate + 4-hydroxybenzoate = 4-hydroxy-3-(all-trans-octaprenyl)benzoate + diphosphate. The protein operates within cofactor biosynthesis; ubiquinone biosynthesis. Its function is as follows. Catalyzes the prenylation of para-hydroxybenzoate (PHB) with an all-trans polyprenyl group. Mediates the second step in the final reaction sequence of ubiquinone-8 (UQ-8) biosynthesis, which is the condensation of the polyisoprenoid side chain with PHB, generating the first membrane-bound Q intermediate 3-octaprenyl-4-hydroxybenzoate. The protein is 4-hydroxybenzoate octaprenyltransferase of Pseudomonas fluorescens (strain ATCC BAA-477 / NRRL B-23932 / Pf-5).